Here is a 128-residue protein sequence, read N- to C-terminus: uncharacterized protein (128 aa).

Transmembrane regions (helical) follow at residues 45 to 65 (GYFHWSLITQNYIIFLFLFPF) and 95 to 115 (FMSHIPVLTVISYCVCCLSCF).

The protein localises to the membrane. This is an uncharacterized protein from Saccharomyces cerevisiae (strain ATCC 204508 / S288c) (Baker's yeast).